The following is a 153-amino-acid chain: Large ribosomal subunit protein uL22 (153 aa).

Belongs to the universal ribosomal protein uL22 family. Part of the 50S ribosomal subunit.

Its function is as follows. This protein binds specifically to 23S rRNA. It makes multiple contacts with different domains of the 23S rRNA in the assembled 50S subunit and ribosome. The globular domain of the protein is located near the polypeptide exit tunnel on the outside of the subunit, while an extended beta-hairpin is found that lines the wall of the exit tunnel in the center of the 70S ribosome. The polypeptide is Large ribosomal subunit protein uL22 (Methanococcus maripaludis (strain C5 / ATCC BAA-1333)).